The following is a 283-amino-acid chain: MAIAKSVRARAVGLRSLRVLCAQRSVAREFSVLNRPQPNYPGHIPLTPIERGALAIGSAVGSLLNPRRGDLIATVGETTATPFFIYRLRDAMLADPTGRRILRDRPRITSQTLSLPYLRSLPKNTVGYTYATWLDREGVSPDTRSSVQYIDDEECAYVMQRYRECHDFYHAVTGLPIVVEGEIALKAFEFMNTLIPMTGLSVFAAIRLKPEEKQRFWSIHLPWAIRSGLASKELINVYWEEQLERDVNELREELNIEKPPDLRDIRKKVREQKKAAKEAVIKS.

A mitochondrion-targeting transit peptide spans 1–25 (MAIAKSVRARAVGLRSLRVLCAQRS). Zn(2+)-binding residues include H166, D167, H170, and E182.

Belongs to the COQ4 family. Component of a multi-subunit COQ enzyme complex, composed of at least COQ3, COQ4, COQ5, COQ6, COQ7 and COQ9. Zn(2+) is required as a cofactor.

It localises to the mitochondrion inner membrane. The enzyme catalyses a 4-hydroxy-3-methoxy-5-(all-trans-polyprenyl)benzoate + H(+) = a 2-methoxy-6-(all-trans-polyprenyl)phenol + CO2. It functions in the pathway cofactor biosynthesis; ubiquinone biosynthesis. In terms of biological role, lyase that catalyzes the C1-decarboxylation of 4-hydroxy-3-methoxy-5-(all-trans-polyprenyl)benzoic acid into 2-methoxy-6-(all-trans-polyprenyl)phenol during ubiquinone biosynthesis. The protein is Ubiquinone biosynthesis protein COQ4, mitochondrial of Coccidioides immitis (strain RS) (Valley fever fungus).